An 81-amino-acid polypeptide reads, in one-letter code: Trefoil factor 3 (81 aa).

The signal sequence occupies residues 1 to 22 (METRAFWTTLLLVLVAGSSCKA). In terms of domain architecture, P-type spans 31–74 (SQCMVPANVRVDCGYPTVTSEQCNNRGCCFDSSIPNVPWCFKPL). Intrachain disulfides connect C33/C59, C43/C58, and C53/C70.

As to quaternary structure, monomer. Homodimer; disulfide-linked. In terms of tissue distribution, expressed in goblet cells of the intestines, and colon, in paraventricular hypothalamus and supraoptic nuclei. Weakly expressed in gastric epithelial cells (at protein level). Expressed by goblet cells of small and large intestinal epithelia, kidney and stomach. Expressed in the paraventricular hypothalamus, arcuate nucleus and amygdala of the brain. Weakly expressed in gastric epithelial cells.

The protein localises to the secreted. It localises to the extracellular space. The protein resides in the extracellular matrix. Its subcellular location is the cytoplasm. Functionally, involved in the maintenance and repair of the intestinal mucosa. Promotes the mobility of epithelial cells in healing processes (motogen). The sequence is that of Trefoil factor 3 (Tff3) from Rattus norvegicus (Rat).